The following is a 331-amino-acid chain: Phosphate acyltransferase (331 aa).

Belongs to the PlsX family. As to quaternary structure, homodimer. Probably interacts with PlsY.

It localises to the cytoplasm. It carries out the reaction a fatty acyl-[ACP] + phosphate = an acyl phosphate + holo-[ACP]. The protein operates within lipid metabolism; phospholipid metabolism. Catalyzes the reversible formation of acyl-phosphate (acyl-PO(4)) from acyl-[acyl-carrier-protein] (acyl-ACP). This enzyme utilizes acyl-ACP as fatty acyl donor, but not acyl-CoA. The chain is Phosphate acyltransferase from Ureaplasma urealyticum serovar 10 (strain ATCC 33699 / Western).